Here is a 304-residue protein sequence, read N- to C-terminus: Methionyl-tRNA formyltransferase (304 aa).

107–110 (SLLP) lines the (6S)-5,6,7,8-tetrahydrofolate pocket.

The protein belongs to the Fmt family.

The catalysed reaction is L-methionyl-tRNA(fMet) + (6R)-10-formyltetrahydrofolate = N-formyl-L-methionyl-tRNA(fMet) + (6S)-5,6,7,8-tetrahydrofolate + H(+). In terms of biological role, attaches a formyl group to the free amino group of methionyl-tRNA(fMet). The formyl group appears to play a dual role in the initiator identity of N-formylmethionyl-tRNA by promoting its recognition by IF2 and preventing the misappropriation of this tRNA by the elongation apparatus. This is Methionyl-tRNA formyltransferase from Coprothermobacter proteolyticus (strain ATCC 35245 / DSM 5265 / OCM 4 / BT).